The chain runs to 510 residues: NAD(P)H-quinone oxidoreductase subunit 2 A, chloroplastic (510 aa).

The next 14 helical transmembrane spans lie at 31–51 (FIFP…IDLT), 59–79 (WFYF…LFRW), 99–119 (IFQF…VEYI), 124–144 (MAIT…MFLC), 149–169 (LITI…LSGY), 184–204 (LLMG…LYGL), 229–249 (ISIA…LAPF), 261–281 (PTPV…ALAT), 295–315 (WHLL…LLAI), 323–343 (MLAY…IVGD), 354–374 (YMLF…LFGL), 395–415 (ALSL…AGFF), 418–438 (LYLF…IGLL), and 484–504 (MTVC…ILAI).

The protein belongs to the complex I subunit 2 family. As to quaternary structure, NDH is composed of at least 16 different subunits, 5 of which are encoded in the nucleus.

It is found in the plastid. Its subcellular location is the chloroplast thylakoid membrane. The catalysed reaction is a plastoquinone + NADH + (n+1) H(+)(in) = a plastoquinol + NAD(+) + n H(+)(out). It carries out the reaction a plastoquinone + NADPH + (n+1) H(+)(in) = a plastoquinol + NADP(+) + n H(+)(out). In terms of biological role, NDH shuttles electrons from NAD(P)H:plastoquinone, via FMN and iron-sulfur (Fe-S) centers, to quinones in the photosynthetic chain and possibly in a chloroplast respiratory chain. The immediate electron acceptor for the enzyme in this species is believed to be plastoquinone. Couples the redox reaction to proton translocation, and thus conserves the redox energy in a proton gradient. The polypeptide is NAD(P)H-quinone oxidoreductase subunit 2 A, chloroplastic (Oryza sativa subsp. japonica (Rice)).